Consider the following 228-residue polypeptide: Large ribosomal subunit protein bL25 (228 aa).

The segment covering 1-10 (MNSLDANTRN) has biased composition (polar residues). 2 disordered regions span residues 1–20 (MNSL…VRSL) and 187–228 (MKEP…EEKK). Residues 202–228 (EDGKEAAPAAEGDKKDDGEKKATEEKK) are compositionally biased toward basic and acidic residues.

This sequence belongs to the bacterial ribosomal protein bL25 family. CTC subfamily. Part of the 50S ribosomal subunit; part of the 5S rRNA/L5/L18/L25 subcomplex. Contacts the 5S rRNA. Binds to the 5S rRNA independently of L5 and L18.

This is one of the proteins that binds to the 5S RNA in the ribosome where it forms part of the central protuberance. The protein is Large ribosomal subunit protein bL25 of Pelagibacter ubique (strain HTCC1062).